The chain runs to 107 residues: Nucleoid-associated protein Daro_0807 (107 aa).

Belongs to the YbaB/EbfC family. Homodimer.

The protein localises to the cytoplasm. Its subcellular location is the nucleoid. Functionally, binds to DNA and alters its conformation. May be involved in regulation of gene expression, nucleoid organization and DNA protection. This chain is Nucleoid-associated protein Daro_0807, found in Dechloromonas aromatica (strain RCB).